Consider the following 876-residue polypeptide: Exosome complex component 10 homolog (876 aa).

A disordered region spans residues 1 to 22; it reads MSGEESMPDEEQKQSEEEEEMI. The 3'-5' exonuclease domain occupies 279–445; sequence TMIDTKEKLE…YSYDMLREQL (167 aa). Mg(2+) contacts are provided by Asp303, Glu305, Asp361, and Asp430. In terms of domain architecture, HRDC spans 489 to 569; sequence NTRQDYALTH…VEARDVKLEK (81 aa). 3 stretches are compositionally biased toward basic and acidic residues: residues 690 to 730, 741 to 752, and 834 to 847; these read EKQE…EFDA, VPDDPNKPKDPE, and KPVRDNNADFDPFH. The interval 690–876 is disordered; the sequence is EKQEEEERKE…NRQGTINYKK (187 aa). Residues 848 to 861 show a composition bias toward basic residues; the sequence is QKYRLKNKTKKNMA.

It belongs to the exosome component 10/RRP6 family. Component of the RNA exosome complex. Interacts with crn-5. The cofactor is Mg(2+). As to expression, ubiquitously expressed.

It localises to the nucleus. It is found in the nucleolus. The protein localises to the nucleoplasm. Its function is as follows. Catalytic component of the RNA exosome complex which has 3'-&gt;5' exoribonuclease activity and participates in a multitude of cellular RNA processing and degradation events. Involved in apoptotic DNA degradation. Involved in regulation of antisense ribosomal siRNA production. Involved in response to cold-warm shock. This is Exosome complex component 10 homolog from Caenorhabditis elegans.